Consider the following 493-residue polypeptide: Guanosine-5'-triphosphate,3'-diphosphate pyrophosphatase (493 aa).

Belongs to the GppA/Ppx family. GppA subfamily.

The enzyme catalyses guanosine 3'-diphosphate 5'-triphosphate + H2O = guanosine 3',5'-bis(diphosphate) + phosphate + H(+). It participates in purine metabolism; ppGpp biosynthesis; ppGpp from GTP: step 2/2. Catalyzes the conversion of pppGpp to ppGpp. Guanosine pentaphosphate (pppGpp) is a cytoplasmic signaling molecule which together with ppGpp controls the 'stringent response', an adaptive process that allows bacteria to respond to amino acid starvation, resulting in the coordinated regulation of numerous cellular activities. The protein is Guanosine-5'-triphosphate,3'-diphosphate pyrophosphatase of Salmonella gallinarum (strain 287/91 / NCTC 13346).